Consider the following 416-residue polypeptide: Gamma-glutamyl phosphate reductase (416 aa).

It belongs to the gamma-glutamyl phosphate reductase family.

The protein localises to the cytoplasm. It carries out the reaction L-glutamate 5-semialdehyde + phosphate + NADP(+) = L-glutamyl 5-phosphate + NADPH + H(+). Its pathway is amino-acid biosynthesis; L-proline biosynthesis; L-glutamate 5-semialdehyde from L-glutamate: step 2/2. Its function is as follows. Catalyzes the NADPH-dependent reduction of L-glutamate 5-phosphate into L-glutamate 5-semialdehyde and phosphate. The product spontaneously undergoes cyclization to form 1-pyrroline-5-carboxylate. The polypeptide is Gamma-glutamyl phosphate reductase (Actinobacillus succinogenes (strain ATCC 55618 / DSM 22257 / CCUG 43843 / 130Z)).